We begin with the raw amino-acid sequence, 237 residues long: Protein CUSTOS (237 aa).

3 disordered regions span residues 1-23 (MAAP…LDRF), 50-69 (LRVR…TTPE), and 97-237 (ISKA…LGNE). A compositionally biased stretch (basic and acidic residues) spans 52–62 (VRPDCHEHDGN). Polar residues predominate over residues 162–177 (STLQQEPQSTPSNVCD). Residues 181 to 190 (PKKKRKKKKK) are compositionally biased toward basic residues. The Nucleolar localization signal (NLS1) signature appears at 182–190 (KKKRKKKKK). Composition is skewed to basic and acidic residues over residues 203–216 (ETMH…ELQA) and 225–237 (KLEM…LGNE). A Nucleolar localization signal (NLS2) motif is present at residues 217-225 (KRKKKKKQK).

Belongs to the CUSTOS family. In terms of assembly, interacts (via NLS1 and NLS2) with dvl2; the interaction is negatively regulated by Wnt stimulation. Interacts with csnk1a1. Interacts with ctnnb1; the interaction is positively regulated by Wnt stimulation. In terms of processing, phosphorylated by ck1/csnk1a1.

It localises to the nucleus envelope. Its function is as follows. Essential for Spemann-Mangold organizer formation and subsequent anterior head development in the embryo. Inhibits canonical Wnt signaling pathway by antagonizing nuclear import of beta-catenin (ctnnb1) during embryogenesis. The sequence is that of Protein CUSTOS from Xenopus laevis (African clawed frog).